We begin with the raw amino-acid sequence, 331 residues long: Flavonol synthase 1 (331 aa).

The Fe2OG dioxygenase domain maps to 191–292 (DAIELLLKIN…RMSWPVFCSP (102 aa)). Fe cation-binding residues include histidine 217, aspartate 219, and histidine 273. A 2-oxoglutarate-binding site is contributed by arginine 283.

Belongs to the iron/ascorbate-dependent oxidoreductase family. Requires L-ascorbate as cofactor. The cofactor is Fe(2+). In terms of tissue distribution, expressed in young cromes.

It catalyses the reaction a (2R,3R)-dihydroflavonol + 2-oxoglutarate + O2 = a flavonol + succinate + CO2 + H2O. The catalysed reaction is (2R,3R)-dihydrokaempferol + 2-oxoglutarate + O2 = kaempferol + succinate + CO2 + H2O + H(+). It carries out the reaction (2R,3R)-dihydroquercetin + 2-oxoglutarate + O2 = quercetin + succinate + CO2 + H2O + H(+). The enzyme catalyses (2R,3R)-dihydromyricetin + 2-oxoglutarate + O2 = myricetin + succinate + CO2 + H2O + H(+). Its pathway is flavonoid metabolism. Functionally, catalyzes the formation of flavonols from dihydroflavonols. Can act on dihydrokaempferol to produce kaempferol, on dihydroquercetin to produce quercitin and on dihydromyricetin to produce myricetin. This Crocosmia x crocosmiiflora (Montbretia) protein is Flavonol synthase 1.